The sequence spans 790 residues: Pentatricopeptide repeat-containing protein At1g25360 (790 aa).

PPR repeat units lie at residues 48 to 82, 84 to 109, 112 to 146, 147 to 182, 183 to 217, 218 to 248, 250 to 284, 285 to 315, 319 to 349, 350 to 384, 385 to 415, 416 to 450, 451 to 481, 482 to 516, 517 to 551, and 553 to 583; these read RAHILNRLIDVYCKSSELNYARQLFDEISEPDKIA, TTMVSGYCASGDITLARGVFEKAPVC, DTVMYNAMITGFSHNNDGYSAINLFCKMKHEGFKP, DNFTFASVLAGLALVADDEKQCVQFHAAALKSGAGY, ITSVSNALVSVYSKCASSPSLLHSARKVFDEILEK, DERSWTTMMTGYVKNGYFDLGEELLEGMDDN, KLVAYNAMISGYVNRGFYQEALEMVRRMVSSGIEL, DEFTYPSVIRACATAGLLQLGKQVHAYVLRR, SFHFDNSLVSLYYKCGKFDEARAIFEKMPAK, DLVSWNALLSGYVSSGHIGEAKLIFKEMKEKNILS, WMIMISGLAENGFGEEGLKLFSCMKREGFEP, CDYAFSGAIKSCAVLGAYCNGQQYHAQLLKIGFDS, SLSAGNALITMYAKCGVVEEARQVFRTMPCL, DSVSWNALIAALGQHGHGAEAVDVYEEMLKKGIRP, DRITLLTVLTACSHAGLVDQGRKYFDSMETVYRIP, and GADHYARLIDLLCRSGKFSDAESVIESLPFK. The type E motif stretch occupies residues 588–663; the sequence is IWEALLSGCR…EVACSWIEME (76 aa). The type E(+) motif stretch occupies residues 664–694; the sequence is TQVHTFLVDDTSHPEAEAVYIYLQDLGKEMR. Positions 695–790 are type DYW motif; it reads RLGYVPDTSF…NGECSCGNFW (96 aa).

It belongs to the PPR family. PCMP-H subfamily.

The polypeptide is Pentatricopeptide repeat-containing protein At1g25360 (PCMP-H74) (Arabidopsis thaliana (Mouse-ear cress)).